The following is a 323-amino-acid chain: tRNA U34 carboxymethyltransferase (323 aa).

Residues K91, W105, K110, G130, 152 to 154 (DPT), 181 to 182 (IE), M196, Y200, and R315 each bind carboxy-S-adenosyl-L-methionine.

It belongs to the class I-like SAM-binding methyltransferase superfamily. CmoB family. Homotetramer.

It catalyses the reaction carboxy-S-adenosyl-L-methionine + 5-hydroxyuridine(34) in tRNA = 5-carboxymethoxyuridine(34) in tRNA + S-adenosyl-L-homocysteine + H(+). In terms of biological role, catalyzes carboxymethyl transfer from carboxy-S-adenosyl-L-methionine (Cx-SAM) to 5-hydroxyuridine (ho5U) to form 5-carboxymethoxyuridine (cmo5U) at position 34 in tRNAs. The chain is tRNA U34 carboxymethyltransferase from Shigella flexneri.